A 205-amino-acid polypeptide reads, in one-letter code: MYRIKDEWGEFLVRLARKAIEEYVRNGRVIEPPEDTPPELWEKMGVFVTLNRYRAPPQMALRGCIGFPLPIYPLVEATIKAAIHAAVEDPRFPPVRPEELDELTVEVSVLTPPEPIEGPPEERPRKIKVGRDGLIVEKGFYSGLLLPQVPVEWGWDEEEFLAQTCWKAGLPPDCWLDPDTKVYRFTAEIFEEEYPRGPVRRKPLV.

The 195-residue stretch at 7 to 201 (EWGEFLVRLA…EEYPRGPVRR (195 aa)) folds into the AMMECR1 domain.

The sequence is that of Protein TGAM_1450 from Thermococcus gammatolerans (strain DSM 15229 / JCM 11827 / EJ3).